The primary structure comprises 400 residues: Elongation factor Tu 2 (400 aa).

The 200-residue stretch at 10-209 folds into the tr-type G domain; sequence KPHLNIGTIG…AVDSYIPLPQ (200 aa). The G1 stretch occupies residues 19 to 26; it reads GHIDHGKT. 19–26 contacts GTP; sequence GHIDHGKT. Mg(2+) is bound at residue threonine 26. A G2 region spans residues 60–64; that stretch reads GITIN. The tract at residues 81 to 84 is G3; sequence DCPG. Residues 81–85 and 136–139 each bind GTP; these read DCPGH and NKID. The segment at 136 to 139 is G4; the sequence is NKID. The G5 stretch occupies residues 174–176; it reads SAL.

This sequence belongs to the TRAFAC class translation factor GTPase superfamily. Classic translation factor GTPase family. EF-Tu/EF-1A subfamily. As to quaternary structure, monomer.

Its subcellular location is the cytoplasm. The enzyme catalyses GTP + H2O = GDP + phosphate + H(+). Functionally, GTP hydrolase that promotes the GTP-dependent binding of aminoacyl-tRNA to the A-site of ribosomes during protein biosynthesis. This is Elongation factor Tu 2 from Syntrophomonas wolfei subsp. wolfei (strain DSM 2245B / Goettingen).